A 424-amino-acid chain; its full sequence is MAKQIQAIRGMNDILPTQSPLWQKLETVLRDTVGSYGYSEIRTPIVESTDLFKRSIGEVTDIVEKEMYTFEDRNGDSLTLRPEGTASTVRAGNEHGLLYNQEQRLWYMGPMFRHERPQKGRYRQFHQFGVEVYGIPTADIDAEVLMLSAKLWEKLGITEHVTLELNTLGDTEERAAYRDALIAFLEQHKEVLDEDSQRRMYSNPLRVLDSKNADVQALLADAPVLMDYFGEDTRSHFSHLCELLEAVGIQYTINPRLVRGLDYYNRTVFEWVTSSLGSQGTVLAGGRYDGLVGQLGGKPTPAVGFAMGLERIVLLLQTLELDKDIGPAVDVYVTAMGDNCKVEAIKIAQELRASLPTAKVMSHCGGGNFKKQMKRADKSGACVALVIGEDELANNQVAVKHLREDKAQELVARDALATYIAELI.

It belongs to the class-II aminoacyl-tRNA synthetase family. As to quaternary structure, homodimer.

It localises to the cytoplasm. It carries out the reaction tRNA(His) + L-histidine + ATP = L-histidyl-tRNA(His) + AMP + diphosphate + H(+). The polypeptide is Histidine--tRNA ligase (Shewanella pealeana (strain ATCC 700345 / ANG-SQ1)).